A 113-amino-acid polypeptide reads, in one-letter code: Large ribosomal subunit protein bL17 (113 aa).

The protein belongs to the bacterial ribosomal protein bL17 family. In terms of assembly, part of the 50S ribosomal subunit. Contacts protein L32.

This chain is Large ribosomal subunit protein bL17, found in Alkaliphilus metalliredigens (strain QYMF).